Consider the following 404-residue polypeptide: Growth/differentiation factor 6-A (404 aa).

The signal sequence occupies residues 1–24 (MDALRAVAFYALFVFLWSLPCCQS). Positions 25–284 (AALISQKRSK…LQFKARRRRR (260 aa)) are excised as a propeptide. The N-linked (GlcNAc...) asparagine glycan is linked to Asn-91. The disordered stretch occupies residues 263-304 (KSRGDDDEEESALQFKARRRRRTALNNRHGKRHGKKSKSRCS). The span at 278 to 304 (KARRRRRTALNNRHGKRHGKKSKSRCS) shows a compositional bias: basic residues. 3 cysteine pairs are disulfide-bonded: Cys-303/Cys-369, Cys-332/Cys-401, and Cys-336/Cys-403.

This sequence belongs to the TGF-beta family. As to quaternary structure, homodimer; disulfide-linked. First expressed in late gastrula stage embryos (9.5 hours post fertilization (hpf)) in anterior neuroectoderm corresponding to the future dorsal part of the brain. Shortly after tailbud formation (11 hpf), expression expands to the entire neural region and is subsequently expressed in derivatives of the lateral neural plate and migrating neural crest cells, with the future midbrain and hindbrain showing strong expression. Also expressed weakly and transiently in the posterior embryo from 11.5 hpf to 15 hpf in the lateral mesoderm, and in ectoderm above the neural keel. At 14 hpf, expressed along the entire length of the embryo and starting around the 16-somite stage, expressed in the dorsal quadrant of the retina, representing the distal tip of the eye anlage. At this stage, also expressed in the hatching gland and the hypochord. At 24 hpf, expressed in the roof plate outlining the fourth brain ventricle, in the posterior hypochord, the primitive gut endoderm, the ventral tail mesenchyme, the dorsal part of the neural tube and the dorsal fin. Weakly expressed in the dorsal part of the posterior spinal cord and in blood cell precursors.

It is found in the secreted. Functionally, growth factor that controls proliferation and cellular differentiation in the retina. Plays a key role in regulating apoptosis during retinal development. Establishes dorsal-ventral positional information in the retina and controls the formation of the retinotectal map. Functions maternally in dorsal/ventral patterning to induce the expression of the zygotic bmp2b and bmp4 genes and ventralize embryos. Zygotic expression does not appear to regulate axis specification, but instead functions to establish the integrity of the axial vessels during embryonic development. May be involved in maintaining the identity of cells of the dorsal-most neural tube and of at least a subset of neural crest cells. The protein is Growth/differentiation factor 6-A (gdf6a) of Danio rerio (Zebrafish).